We begin with the raw amino-acid sequence, 357 residues long: Membrane-bound lytic murein transglycosylase C (357 aa).

The N-terminal stretch at 1–16 is a signal peptide; that stretch reads MKKMLALLVIAPLLVS. A lipid anchor (N-palmitoyl cysteine) is attached at cysteine 17. Cysteine 17 carries S-diacylglycerol cysteine lipidation.

Belongs to the transglycosylase Slt family.

The protein resides in the cell outer membrane. The enzyme catalyses Exolytic cleavage of the (1-&gt;4)-beta-glycosidic linkage between N-acetylmuramic acid (MurNAc) and N-acetylglucosamine (GlcNAc) residues in peptidoglycan, from either the reducing or the non-reducing ends of the peptidoglycan chains, with concomitant formation of a 1,6-anhydrobond in the MurNAc residue.. In terms of biological role, murein-degrading enzyme. May play a role in recycling of muropeptides during cell elongation and/or cell division. This is Membrane-bound lytic murein transglycosylase C from Pectobacterium atrosepticum (strain SCRI 1043 / ATCC BAA-672) (Erwinia carotovora subsp. atroseptica).